The following is a 482-amino-acid chain: UDP-N-acetylmuramate--L-alanine ligase (482 aa).

An ATP-binding site is contributed by 122–128; that stretch reads GTHGKTT.

This sequence belongs to the MurCDEF family.

Its subcellular location is the cytoplasm. It catalyses the reaction UDP-N-acetyl-alpha-D-muramate + L-alanine + ATP = UDP-N-acetyl-alpha-D-muramoyl-L-alanine + ADP + phosphate + H(+). It participates in cell wall biogenesis; peptidoglycan biosynthesis. In terms of biological role, cell wall formation. The chain is UDP-N-acetylmuramate--L-alanine ligase from Mycolicibacterium smegmatis (strain ATCC 700084 / mc(2)155) (Mycobacterium smegmatis).